The chain runs to 974 residues: Protein bicaudal C homolog 1 (974 aa).

Residues 1-50 (MAAQGEPGYLAAQSDPGSNSERSTDSPVPGSEDDLVAGATLHSPEWSEER) form a disordered region. Ser-26, Ser-31, and Ser-43 each carry phosphoserine. KH domains lie at 132–199 (RVTL…RVRI) and 284–348 (PVST…RQYL). The residue at position 398 (Lys-398) is an N6-acetyllysine. 3 positions are modified to phosphoserine: Ser-576, Ser-612, and Ser-679. Disordered stretches follow at residues 593–644 (VLSA…GDLK), 665–719 (GTKN…HLAP), and 783–846 (YKPT…KSTE). Residues 602–619 (SIQTSGSEQTSPKSSPTE) are compositionally biased toward polar residues. A compositionally biased stretch (basic and acidic residues) spans 690–703 (LADKKAPGSERAAE). An SAM domain is found at 873–936 (FKGSDLPELF…LLAISELNKN (64 aa)).

Belongs to the BicC family. As to quaternary structure, interacts (via KH domains) with ANKS6 (via SAM domain) in an RNA-dependent manner. Interacts with ANKS3.

It is found in the cytoplasm. Putative RNA-binding protein. Acts as a negative regulator of Wnt signaling. May be involved in regulating gene expression during embryonic development. This chain is Protein bicaudal C homolog 1 (BICC1), found in Homo sapiens (Human).